The following is a 213-amino-acid chain: Small ribosomal subunit protein uS7 (213 aa).

This sequence belongs to the universal ribosomal protein uS7 family. As to quaternary structure, component of the small ribosomal subunit (SSU). Mature N.crassa ribosomes consist of a small (40S) and a large (60S) subunit. The 40S small subunit contains 1 molecule of ribosomal RNA (18S rRNA) and at least 32 different proteins. The large 60S subunit contains 3 rRNA molecules (26S, 5.8S and 5S rRNA) and at least 42 different proteins.

The protein localises to the cytoplasm. Its function is as follows. Component of the ribosome, a large ribonucleoprotein complex responsible for the synthesis of proteins in the cell. The small ribosomal subunit (SSU) binds messenger RNAs (mRNAs) and translates the encoded message by selecting cognate aminoacyl-transfer RNA (tRNA) molecules. The large subunit (LSU) contains the ribosomal catalytic site termed the peptidyl transferase center (PTC), which catalyzes the formation of peptide bonds, thereby polymerizing the amino acids delivered by tRNAs into a polypeptide chain. The nascent polypeptides leave the ribosome through a tunnel in the LSU and interact with protein factors that function in enzymatic processing, targeting, and the membrane insertion of nascent chains at the exit of the ribosomal tunnel. This chain is Small ribosomal subunit protein uS7 (rps-5), found in Neurospora crassa (strain ATCC 24698 / 74-OR23-1A / CBS 708.71 / DSM 1257 / FGSC 987).